The primary structure comprises 116 residues: Flagellar transcriptional regulator FlhD (116 aa).

This sequence belongs to the FlhD family. As to quaternary structure, homodimer; disulfide-linked. Forms a heterohexamer composed of two FlhC and four FlhD subunits. Each FlhC binds a FlhD dimer, forming a heterotrimer, and a hexamer assembles by dimerization of two heterotrimers.

The protein localises to the cytoplasm. Its function is as follows. Functions in complex with FlhC as a master transcriptional regulator that regulates transcription of several flagellar and non-flagellar operons by binding to their promoter region. Activates expression of class 2 flagellar genes, including fliA, which is a flagellum-specific sigma factor that turns on the class 3 genes. Also regulates genes whose products function in a variety of physiological pathways. This is Flagellar transcriptional regulator FlhD from Salmonella arizonae (strain ATCC BAA-731 / CDC346-86 / RSK2980).